Reading from the N-terminus, the 176-residue chain is NAD(P)H-quinone oxidoreductase subunit 6, chloroplastic (176 aa).

The next 5 helical transmembrane spans lie at 10 to 30 (ILMLFGGFVLLLGGLGVVLLT), 33 to 53 (IYSAFSLGLVLVCISLFYFLL), 60 to 80 (VAQLLIYVGAINVLIIFAVMF), 95 to 115 (IGDGFTSIVCITIVFSLMTTI), and 152 to 172 (FYLPFELISIILLVSLIGAIT).

This sequence belongs to the complex I subunit 6 family. As to quaternary structure, NDH is composed of at least 16 different subunits, 5 of which are encoded in the nucleus.

It localises to the plastid. The protein localises to the chloroplast thylakoid membrane. The enzyme catalyses a plastoquinone + NADH + (n+1) H(+)(in) = a plastoquinol + NAD(+) + n H(+)(out). The catalysed reaction is a plastoquinone + NADPH + (n+1) H(+)(in) = a plastoquinol + NADP(+) + n H(+)(out). Functionally, NDH shuttles electrons from NAD(P)H:plastoquinone, via FMN and iron-sulfur (Fe-S) centers, to quinones in the photosynthetic chain and possibly in a chloroplast respiratory chain. The immediate electron acceptor for the enzyme in this species is believed to be plastoquinone. Couples the redox reaction to proton translocation, and thus conserves the redox energy in a proton gradient. The polypeptide is NAD(P)H-quinone oxidoreductase subunit 6, chloroplastic (ndhG) (Lolium perenne (Perennial ryegrass)).